A 101-amino-acid chain; its full sequence is Small ribosomal subunit protein uS14m (101 aa).

It belongs to the universal ribosomal protein uS14 family. Component of the mitochondrial ribosome small subunit (28S) which comprises a 12S rRNA and about 30 distinct proteins. Interacts with LIAT1.

The protein resides in the mitochondrion. The polypeptide is Small ribosomal subunit protein uS14m (mrps14) (Dictyostelium citrinum (Slime mold)).